We begin with the raw amino-acid sequence, 376 residues long: Transmembrane protein 183A (376 aa).

Disordered stretches follow at residues 1 to 20 (MARGPGPLGRPRPDTVAMPK) and 100 to 127 (MDAQEESIHERTVSRKKKSKRHKEELDG). Residues 300 to 320 (LNFIFIPIVMGMIFTLFTINV) traverse the membrane as a helical segment.

The protein belongs to the TMEM183 family.

The protein localises to the membrane. The sequence is that of Transmembrane protein 183A (TMEM183A) from Homo sapiens (Human).